The sequence spans 198 residues: Holliday junction branch migration complex subunit RuvA (198 aa).

Residues 1-64 (MYEYIKGEYM…EDFIGLYGFE (64 aa)) form a domain I region. The interval 65–143 (SLEELDMFKL…SDELLNCIDE (79 aa)) is domain II. The tract at residues 144–154 (FDDVTQDNSLA) is flexible linker. Positions 154-198 (ALSEALSALISLGYTEKEAEKVLKDVDKSESVENIIKSALVKLMG) are domain III.

This sequence belongs to the RuvA family. As to quaternary structure, homotetramer. Forms an RuvA(8)-RuvB(12)-Holliday junction (HJ) complex. HJ DNA is sandwiched between 2 RuvA tetramers; dsDNA enters through RuvA and exits via RuvB. An RuvB hexamer assembles on each DNA strand where it exits the tetramer. Each RuvB hexamer is contacted by two RuvA subunits (via domain III) on 2 adjacent RuvB subunits; this complex drives branch migration. In the full resolvosome a probable DNA-RuvA(4)-RuvB(12)-RuvC(2) complex forms which resolves the HJ.

It localises to the cytoplasm. The RuvA-RuvB-RuvC complex processes Holliday junction (HJ) DNA during genetic recombination and DNA repair, while the RuvA-RuvB complex plays an important role in the rescue of blocked DNA replication forks via replication fork reversal (RFR). RuvA specifically binds to HJ cruciform DNA, conferring on it an open structure. The RuvB hexamer acts as an ATP-dependent pump, pulling dsDNA into and through the RuvAB complex. HJ branch migration allows RuvC to scan DNA until it finds its consensus sequence, where it cleaves and resolves the cruciform DNA. This chain is Holliday junction branch migration complex subunit RuvA, found in Clostridium botulinum (strain Alaska E43 / Type E3).